A 216-amino-acid chain; its full sequence is Octanoyltransferase (216 aa).

In terms of domain architecture, BPL/LPL catalytic spans 31-205 (STTRDEVWLV…ELVTLLDYEQ (175 aa)). Residues 70–77 (RGGQVTYH), 137–139 (SLG), and 150–152 (GLA) each bind substrate. Cys168 serves as the catalytic Acyl-thioester intermediate.

It belongs to the LipB family.

It localises to the cytoplasm. The catalysed reaction is octanoyl-[ACP] + L-lysyl-[protein] = N(6)-octanoyl-L-lysyl-[protein] + holo-[ACP] + H(+). The protein operates within protein modification; protein lipoylation via endogenous pathway; protein N(6)-(lipoyl)lysine from octanoyl-[acyl-carrier-protein]: step 1/2. Functionally, catalyzes the transfer of endogenously produced octanoic acid from octanoyl-acyl-carrier-protein onto the lipoyl domains of lipoate-dependent enzymes. Lipoyl-ACP can also act as a substrate although octanoyl-ACP is likely to be the physiological substrate. This Vibrio cholerae serotype O1 (strain ATCC 39315 / El Tor Inaba N16961) protein is Octanoyltransferase.